The following is a 383-amino-acid chain: MSWQQRIEQALEERQQSAAYRRRQVNQGGNGRYIQLNGEHYLNFSGNDYLGLSQNAQVIAAWQQGAQQYGVGSGGSGHVTGFSTAHQVLEQQLADWLGYPRALLFISGYAANQALLAALMQAEDRILADRLSHASLLEAAAHSPAQLRRFRHNQPQALADLLAKPCDGQILAVTEGVFSMDGDSAPLAELHRLTRAAGAWLMVDDAHGIGVHGEQGRGSCWQQGVRPELLVVTFGKAFGLSGAAVLCDEPTAEYLLQFARHLIYSTAMPPAQASALQAALHCIRQGDELRARLQDNIQRFRQGAAQLSLTLTESVTAIQPLLVGDNQRALDLAQSLREQGLWVSAIRPPTVPPGGARLRITLTAAHQPQDIDRLLEVLHDVSV.

Arg21 provides a ligand contact to substrate. 108–109 (GY) provides a ligand contact to pyridoxal 5'-phosphate. Position 133 (His133) interacts with substrate. The pyridoxal 5'-phosphate site is built by Ser179, His207, and Thr233. An N6-(pyridoxal phosphate)lysine modification is found at Lys236. Substrate is bound at residue Thr350.

The protein belongs to the class-II pyridoxal-phosphate-dependent aminotransferase family. BioF subfamily. In terms of assembly, homodimer. The cofactor is pyridoxal 5'-phosphate.

The enzyme catalyses 6-carboxyhexanoyl-[ACP] + L-alanine + H(+) = (8S)-8-amino-7-oxononanoate + holo-[ACP] + CO2. The protein operates within cofactor biosynthesis; biotin biosynthesis. In terms of biological role, catalyzes the decarboxylative condensation of pimeloyl-[acyl-carrier protein] and L-alanine to produce 8-amino-7-oxononanoate (AON), [acyl-carrier protein], and carbon dioxide. The chain is 8-amino-7-oxononanoate synthase from Serratia proteamaculans (strain 568).